Here is a 366-residue protein sequence, read N- to C-terminus: Isopentenyl-diphosphate delta-isomerase (366 aa).

6 to 7 (RK) lines the substrate pocket. FMN is bound by residues threonine 63, 64–66 (GMT), serine 94, and asparagine 123. 94–96 (SQR) provides a ligand contact to substrate. Glutamine 158 is a binding site for substrate. Residue glutamate 159 participates in Mg(2+) binding. FMN is bound by residues lysine 191, serine 216, threonine 221, 273 to 275 (GIR), and 294 to 295 (AN).

It belongs to the IPP isomerase type 2 family. As to quaternary structure, homooctamer. Dimer of tetramers. FMN serves as cofactor. NADPH is required as a cofactor. Requires Mg(2+) as cofactor.

The protein localises to the cytoplasm. The catalysed reaction is isopentenyl diphosphate = dimethylallyl diphosphate. In terms of biological role, involved in the biosynthesis of isoprenoids. Catalyzes the 1,3-allylic rearrangement of the homoallylic substrate isopentenyl (IPP) to its allylic isomer, dimethylallyl diphosphate (DMAPP). The protein is Isopentenyl-diphosphate delta-isomerase of Metallosphaera sedula (strain ATCC 51363 / DSM 5348 / JCM 9185 / NBRC 15509 / TH2).